The chain runs to 645 residues: MQRRQQQKEAPSNQNIMATILGSIPREAGVTKIEYEGPRIALYTNTPRYLLEHNEIISNLVNVIKKRIIVRIDESVRKKEEDARKMLSKLVPAEAKLQGTFFDTTTGEVSLEAKRPWLLQRNSAEFSHADVSEKIGWTLRIRKATTSQSSTMQVINRTLRASSIERGKQLKQIGDDIFRPKLATRSEISLTALGGFGQVGRSCMLLSTLDSKVLVDCGVNPGAAHPSESYPRLDWAGITLDDLDAVVIGHAHLDHTGFLPVLAKYGYRGPIYCTEPTLPMMNLIQLDAIKVATAQGRVPVYAERDVRQIMRQAITLPYGTVTDISPDIKLVLANAGHILGSALCHFHIGSGDHNFVYSGDIKFGKSILFEAASWNFPRVETLLIESTYGAKEDIQPTRQEVESAFINAVNGALADGGKVLIPIPAVGRAQEIMMVIDHYMKSGEMAEAPVFTEGMISEASAIHEAHPEYLARELKQKILETDDNPFDSEYFTNVEHADGRDEALRDGSPCIILATSGMLEGGPVLEYFKSIAPHKQNKILFVSYQVNGTLGRRVLDGARQVPLMNRGGKIEVVNIECRMEKLDGFSGHSDYNQLTGFVQKLRPKLRRVLVNHGERRKSENLALAVRRMFRIPAHYPQIQESIKLF.

Residues 10–77 (APSNQNIMAT…IIVRIDESVR (68 aa)) form a KHa region. Residues 78-146 (KKEEDARKML…WTLRIRKATT (69 aa)) are KHb. Positions 187–391 (EISLTALGGF…LLIESTYGAK (205 aa)) are metallo-beta-lactamase N-terminus. His250, His252, Asp254, His255, His337, and Asp360 together coordinate Zn(2+). A beta-Casp region spans residues 392–586 (EDIQPTRQEV…CRMEKLDGFS (195 aa)). The metallo-beta-lactamase C-terminus stretch occupies residues 587 to 645 (GHSDYNQLTGFVQKLRPKLRRVLVNHGERRKSENLALAVRRMFRIPAHYPQIQESIKLF). Residue His612 participates in Zn(2+) binding.

It belongs to the metallo-beta-lactamase superfamily. RNA-metabolizing metallo-beta-lactamase-like family. FttA subfamily. Homodimer. Interacts with RNA polymerase (RNAP), interacts with the Spt4-Spt5 complex. Zn(2+) is required as a cofactor.

In terms of biological role, terminates transcription on the whole genome. Termination is linked to FttA-mediated RNA cleavage and does not require NTP hydrolysis. Cleaves endonucleolytically at the RNA exit channel of RNA polymerase (RNAP); the 5'-3' exonuclease activity of this protein degrades the nascent RNA released from RNAP. Functionally, terminates transcription genome-wide in M.maripaludis. Restores wild-type growth to a strain of Methanococcus maripaludis depleted for this gene at 22 degrees Celsius and prevents transcriptional read-through. Transcription termination is most effective in vivo on RNAs with more than one U4-tract in their 3'-ends. Has endonuclease activity after U-rich tracts in transcription termination sequences. This Cenarchaeum symbiosum (strain A) protein is Transcription termination factor FttA.